We begin with the raw amino-acid sequence, 434 residues long: RNA polymerase II holoenzyme cyclin-like subunit (434 aa).

The 133-residue stretch at Glu-23 to Leu-155 folds into the Cyclin N-terminal domain. The segment covering Gly-248–Thr-278 has biased composition (low complexity). Disordered regions lie at residues Gly-248–Glu-292, Leu-301–Asn-320, and Gln-330–Ser-362. The span at Gln-330–Gly-359 shows a compositional bias: low complexity.

The protein belongs to the cyclin family. Cyclin C subfamily. As to quaternary structure, component of the SRB8-11 complex, a regulatory module of the Mediator complex.

It localises to the nucleus. Component of the SRB8-11 complex. The SRB8-11 complex is a regulatory module of the Mediator complex which is itself involved in regulation of basal and activated RNA polymerase II-dependent transcription. The SRB8-11 complex may be involved in the transcriptional repression of a subset of genes regulated by Mediator. It may inhibit the association of the Mediator complex with RNA polymerase II to form the holoenzyme complex. The SRB8-11 complex phosphorylates the C-terminal domain (CTD) of the largest subunit of RNA polymerase II. The chain is RNA polymerase II holoenzyme cyclin-like subunit (SSN8) from Candida albicans (strain SC5314 / ATCC MYA-2876) (Yeast).